The primary structure comprises 166 residues: PTS system glucose-specific EIIA component (166 aa).

Residues 34–138 (DPVFAQKMMG…SVISPIIITN (105 aa)) form the PTS EIIA type-1 domain. His71 and His86 together coordinate Zn(2+). His86 acts as the Tele-phosphohistidine intermediate; for EIIA activity in catalysis. At His86 the chain carries Phosphohistidine; by HPr.

As to quaternary structure, heterodimer with glycerol kinase (glpk). The cofactor is Zn(2+).

Its subcellular location is the cytoplasm. Functionally, the phosphoenolpyruvate-dependent sugar phosphotransferase system (sugar PTS), a major carbohydrate active transport system, catalyzes the phosphorylation of incoming sugar substrates concomitantly with their translocation across the cell membrane. The enzyme II complex composed of PtsG and Crr is involved in glucose transport. The polypeptide is PTS system glucose-specific EIIA component (crr) (Staphylococcus aureus (strain MSSA476)).